The chain runs to 157 residues: Ribosomal RNA large subunit methyltransferase H (157 aa).

S-adenosyl-L-methionine contacts are provided by residues Leu-73, Gly-105, and 124 to 129 (LSKMTF).

It belongs to the RNA methyltransferase RlmH family. As to quaternary structure, homodimer.

It is found in the cytoplasm. The enzyme catalyses pseudouridine(1915) in 23S rRNA + S-adenosyl-L-methionine = N(3)-methylpseudouridine(1915) in 23S rRNA + S-adenosyl-L-homocysteine + H(+). Its function is as follows. Specifically methylates the pseudouridine at position 1915 (m3Psi1915) in 23S rRNA. The polypeptide is Ribosomal RNA large subunit methyltransferase H (Christiangramia forsetii (strain DSM 17595 / CGMCC 1.15422 / KT0803) (Gramella forsetii)).